We begin with the raw amino-acid sequence, 864 residues long: Mitochondrial 15S rRNA processing factor CCM1 (864 aa).

Residues 1–76 constitute a mitochondrion transit peptide; that stretch reads MYMARCGPKN…REFSNTLKER (76 aa). 2 PPR repeats span residues 319–353 and 356–390; these read NKQN…STKH and DICT…NIKP.

This sequence belongs to the CCM1 family. In terms of assembly, binds to mitochondrial small subunit 15S rRNA.

It localises to the mitochondrion. Its function is as follows. Regulates mitochondrial small subunit maturation by controlling 15S rRNA 5'-end processing. Localizes to the 5' precursor of the 15S rRNA in a position that is subsequently occupied by mS47 in the mature yeast mtSSU. Uses structure and sequence-specific RNA recognition, binding to a single-stranded region of the precursor and specifically recognizing bases -6 to -1. The exchange of Ccm1 for mS47 is coupled to the irreversible removal of precursor rRNA that is accompanied by conformational changes of the mitoribosomal proteins uS5m and mS26. These conformational changes signal completion of 5'-end rRNA processing through protection of the mature 5'-end of the 15S rRNA and stabilization of mS47. The removal of the 5' precursor together with the dissociation of Ccm1 may be catalyzed by the 5'-3' exoribonuclease Pet127. Involved in the specific removal of group I introns in mitochondrial encoded transcripts. In Saccharomyces cerevisiae (strain YJM789) (Baker's yeast), this protein is Mitochondrial 15S rRNA processing factor CCM1 (CCM1).